The primary structure comprises 574 residues: uncharacterized protein (574 aa).

The disordered stretch occupies residues 297-327 (STASKSKKRRKDEVSGAQRNSSPLPQDAVSS). The segment covering 313-327 (AQRNSSPLPQDAVSS) has biased composition (polar residues).

This is an uncharacterized protein from Macaca fascicularis (Crab-eating macaque).